A 607-amino-acid polypeptide reads, in one-letter code: MGIIRELSDSLANRIAAGEVVERPASVVKELVENALDAGATQVDVELEEAGMKRITIRDNGHGFYPEDAELAFVRHATSKIKDEHDLFRIKTLGFRGEALASIASVSKVTLKTKREEQEGIQLTLDCGRLTDRSAIAMNRGTELTVEQLFFNTPARLKYLKTTHTELAAITDILNRVAFAHPDVKLYAVHEGKVLIQTNGSGDVRQALASVYGHQTIQGTLVATGTTADYQLTCHLVKPEVTRASKNYITLILNGRSVKNFALTQAVLNGYHTLLPIGRFPIAVIEVTMDPLLIDVNVHPAKREVRLSKEAELCQLIQETIRLTLSRQTLIPKVTPQKPKKDPSAQEKLEFSYVAEPVEELSSRSVWNYPIPKRTEAGNEHVPSANRIQPPDPSIDMPDEPVPEQTDEPVATGPKFPHLDVIGQLHSSYIVCSGADGMYLIDQHAAQERIKYETYKVMFGRPLEQKQQLLLPYTFEIASDDMRRMDEVLPLLRDVGIELEAFGPQSFIVREVPTWFPSHRQEETIQELMDEALMKRKVDLETYREDAAIMMACKKSIKANHPLNHEMMRQLIVDLAKTEMPFTCPHGRPVIIEWTTYELEKLFKRVT.

Residues 374–411 are disordered; it reads RTEAGNEHVPSANRIQPPDPSIDMPDEPVPEQTDEPVA. The span at 397-407 shows a compositional bias: acidic residues; it reads MPDEPVPEQTD.

Belongs to the DNA mismatch repair MutL/HexB family.

This protein is involved in the repair of mismatches in DNA. It is required for dam-dependent methyl-directed DNA mismatch repair. May act as a 'molecular matchmaker', a protein that promotes the formation of a stable complex between two or more DNA-binding proteins in an ATP-dependent manner without itself being part of a final effector complex. This chain is DNA mismatch repair protein MutL, found in Exiguobacterium sibiricum (strain DSM 17290 / CCUG 55495 / CIP 109462 / JCM 13490 / 255-15).